Reading from the N-terminus, the 305-residue chain is Ribonucleoside-diphosphate reductase small subunit (305 aa).

Residues E64, E94, and H97 each contribute to the Fe cation site. Residue Y101 is part of the active site. A helical membrane pass occupies residues 150–170 (VLVFLLIEGIFFISSFYSIAT). Residues E157, E191, and H194 each contribute to the Fe cation site.

This sequence belongs to the ribonucleoside diphosphate reductase small chain family. As to quaternary structure, heterotetramer composed of a homodimer of the large subunit (R1) and a homodimer of the small subunit (R2). Larger multisubunit protein complex are also active, composed of (R1)n(R2)n. Fe cation serves as cofactor.

Its subcellular location is the host membrane. The catalysed reaction is a 2'-deoxyribonucleoside 5'-diphosphate + [thioredoxin]-disulfide + H2O = a ribonucleoside 5'-diphosphate + [thioredoxin]-dithiol. In terms of biological role, ribonucleoside-diphosphate reductase holoenzyme provides the precursors necessary for viral DNA synthesis. Allows virus growth in non-dividing cells, as well as reactivation from latency in infected hosts. Catalyzes the biosynthesis of deoxyribonucleotides from the corresponding ribonucleotides. The sequence is that of Ribonucleoside-diphosphate reductase small subunit from Equus caballus (Horse).